The sequence spans 163 residues: Neurotrophin-3 (163 aa).

The N-terminal stretch at 1–3 (IQS) is a signal peptide. The propeptide occupies 4–119 (TSMDQGILTE…VLNRTSRRKR (116 aa)). Residues 35-61 (KQTARTKDGTQTTVKKSEAEADATASQ) form a disordered region. N112 carries N-linked (GlcNAc...) asparagine glycosylation.

It belongs to the NGF-beta family.

It localises to the secreted. In terms of biological role, seems to promote the survival of visceral and proprioceptive sensory neurons. The chain is Neurotrophin-3 (NTF3) from Corallus caninus (Emerald tree boa).